A 146-amino-acid chain; its full sequence is Transcriptional regulator MraZ (146 aa).

SpoVT-AbrB domains lie at 5–50 and 77–120; these read SSFH…TFNE and ACEC…SREQ.

It belongs to the MraZ family. Forms oligomers.

It localises to the cytoplasm. The protein localises to the nucleoid. The polypeptide is Transcriptional regulator MraZ (Desulforapulum autotrophicum (strain ATCC 43914 / DSM 3382 / VKM B-1955 / HRM2) (Desulfobacterium autotrophicum)).